The sequence spans 57 residues: DNA gyrase inhibitor YacG (57 aa).

Zn(2+) contacts are provided by Cys5, Cys8, Cys20, and Cys24.

It belongs to the DNA gyrase inhibitor YacG family. As to quaternary structure, interacts with GyrB. The cofactor is Zn(2+).

In terms of biological role, inhibits all the catalytic activities of DNA gyrase by preventing its interaction with DNA. Acts by binding directly to the C-terminal domain of GyrB, which probably disrupts DNA binding by the gyrase. The protein is DNA gyrase inhibitor YacG of Caulobacter vibrioides (strain ATCC 19089 / CIP 103742 / CB 15) (Caulobacter crescentus).